Consider the following 20-residue polypeptide: Acidic phospholipase A2 CbIbeta (20 aa).

The protein belongs to the phospholipase A2 family. Group II subfamily. D49 sub-subfamily. As to quaternary structure, heterodimer of an acidic subunit (CbIalpha or CbIbeta) and a basic subunit (CbII). The acidic subunit (CbI) is non-toxic, and increases the toxicity of the basic subunit (CbII). Ca(2+) serves as cofactor. In terms of processing, contains 7 disulfide bonds. As to expression, expressed by the venom gland.

Its subcellular location is the secreted. It carries out the reaction a 1,2-diacyl-sn-glycero-3-phosphocholine + H2O = a 1-acyl-sn-glycero-3-phosphocholine + a fatty acid + H(+). Heterodimer: presynaptic neurotoxin. Functionally, monomer: Snake venom phospholipase A2 (PLA2) is inactive towards micellar phosphatidylcholine but is weakly active towards non-micellar dithiolecithin. PLA2 catalyzes the calcium-dependent hydrolysis of the 2-acyl groups in 3-sn-phosphoglycerides. In Pseudocerastes fieldi (Field's horned viper), this protein is Acidic phospholipase A2 CbIbeta.